The primary structure comprises 72 residues: Protein P13 (72 aa).

Its subcellular location is the virion membrane. This is Protein P13 (P13) from Pseudomonas phage phi6 (Bacteriophage phi-6).